The sequence spans 246 residues: DNA repair protein RecO (246 aa).

The protein belongs to the RecO family.

Its function is as follows. Involved in DNA repair and RecF pathway recombination. This Bifidobacterium adolescentis (strain ATCC 15703 / DSM 20083 / NCTC 11814 / E194a) protein is DNA repair protein RecO.